The chain runs to 635 residues: Threonine--tRNA ligase (635 aa).

In terms of domain architecture, TGS spans Met1 to Thr61. The interval Asp242–Pro533 is catalytic. Positions 333, 384, and 510 each coordinate Zn(2+).

This sequence belongs to the class-II aminoacyl-tRNA synthetase family. As to quaternary structure, homodimer. It depends on Zn(2+) as a cofactor.

The protein resides in the cytoplasm. The enzyme catalyses tRNA(Thr) + L-threonine + ATP = L-threonyl-tRNA(Thr) + AMP + diphosphate + H(+). Catalyzes the attachment of threonine to tRNA(Thr) in a two-step reaction: L-threonine is first activated by ATP to form Thr-AMP and then transferred to the acceptor end of tRNA(Thr). Also edits incorrectly charged L-seryl-tRNA(Thr). In Burkholderia vietnamiensis (strain G4 / LMG 22486) (Burkholderia cepacia (strain R1808)), this protein is Threonine--tRNA ligase.